A 433-amino-acid chain; its full sequence is uncharacterized protein (433 aa).

One can recognise a Radical SAM core domain in the interval 104–349 (ERGRNIIQVR…ELEYKKKGIE (246 aa)). [4Fe-4S] cluster-binding residues include Cys-118, Cys-122, and Cys-125. S-adenosyl-L-methionine contacts are provided by residues 171–172 (GE) and 236–238 (MLS). One can recognise a TRAM domain in the interval 370 to 433 (PFKVGEVTKV…KDNIIVAELV (64 aa)).

Belongs to the radical SAM superfamily. It depends on [4Fe-4S] cluster as a cofactor.

This is an uncharacterized protein from Methanocaldococcus jannaschii (strain ATCC 43067 / DSM 2661 / JAL-1 / JCM 10045 / NBRC 100440) (Methanococcus jannaschii).